Here is a 223-residue protein sequence, read N- to C-terminus: Kinetochore protein Spc25 (223 aa).

A coiled-coil region spans residues 65–115 (LRCGELEKRANFMEELTQELEATKQRNLVMRDQIKQLNVLARQHRNEVMES).

Belongs to the SPC25 family. In terms of assembly, component of the Ndc80 complex, which is composed of Ndc80, Nuf2 and Spc25.

Its subcellular location is the nucleus. It localises to the chromosome. The protein localises to the centromere. The protein resides in the kinetochore. In terms of biological role, acts as a component of the essential kinetochore-associated Ndc80 complex, which is required for chromosome segregation and spindle checkpoint activity during meiosis and mitosis. Required for kinetochore integrity and the organization of stable microtubule binding sites in the outer plate of the kinetochore. Participates in SAC signaling that responds specifically to disruptions in spindle microtubule dynamics. The NDC80 complex synergistically enhances the affinity of the SKA1 complex for microtubules and may allow the NDC80 complex to track depolymerizing microtubules. This chain is Kinetochore protein Spc25, found in Drosophila lutescens (Fruit fly).